The chain runs to 124 residues: Large ribosomal subunit protein bL21 (124 aa).

This sequence belongs to the bacterial ribosomal protein bL21 family. As to quaternary structure, part of the 50S ribosomal subunit. Contacts protein L20.

In terms of biological role, this protein binds to 23S rRNA in the presence of protein L20. This chain is Large ribosomal subunit protein bL21, found in Synechocystis sp. (strain ATCC 27184 / PCC 6803 / Kazusa).